We begin with the raw amino-acid sequence, 100 residues long: UPF0045 protein MJ1052 (100 aa).

The protein belongs to the UPF0045 family.

In Methanocaldococcus jannaschii (strain ATCC 43067 / DSM 2661 / JAL-1 / JCM 10045 / NBRC 100440) (Methanococcus jannaschii), this protein is UPF0045 protein MJ1052.